Here is a 600-residue protein sequence, read N- to C-terminus: Methionine--tRNA ligase (600 aa).

A 'HIGH' region motif is present at residues 11-21 (PYANGPRHIGH). Cys-143, Cys-146, Cys-156, and Cys-159 together coordinate Zn(2+). The short motif at 350–354 (QFSSS) is the 'KMSKS' region element. Ser-353 provides a ligand contact to ATP.

This sequence belongs to the class-I aminoacyl-tRNA synthetase family. MetG type 1 subfamily. Monomer. It depends on Zn(2+) as a cofactor.

Its subcellular location is the cytoplasm. The catalysed reaction is tRNA(Met) + L-methionine + ATP = L-methionyl-tRNA(Met) + AMP + diphosphate. Functionally, is required not only for elongation of protein synthesis but also for the initiation of all mRNA translation through initiator tRNA(fMet) aminoacylation. This Kineococcus radiotolerans (strain ATCC BAA-149 / DSM 14245 / SRS30216) protein is Methionine--tRNA ligase.